The primary structure comprises 156 residues: ATP synthase subunit b (156 aa).

The helical transmembrane segment at 13–33 (AFIIFVWCCMKFVWPPLMAAI) threads the bilayer.

It belongs to the ATPase B chain family. F-type ATPases have 2 components, F(1) - the catalytic core - and F(0) - the membrane proton channel. F(1) has five subunits: alpha(3), beta(3), gamma(1), delta(1), epsilon(1). F(0) has three main subunits: a(1), b(2) and c(10-14). The alpha and beta chains form an alternating ring which encloses part of the gamma chain. F(1) is attached to F(0) by a central stalk formed by the gamma and epsilon chains, while a peripheral stalk is formed by the delta and b chains.

It localises to the cell inner membrane. In terms of biological role, f(1)F(0) ATP synthase produces ATP from ADP in the presence of a proton or sodium gradient. F-type ATPases consist of two structural domains, F(1) containing the extramembraneous catalytic core and F(0) containing the membrane proton channel, linked together by a central stalk and a peripheral stalk. During catalysis, ATP synthesis in the catalytic domain of F(1) is coupled via a rotary mechanism of the central stalk subunits to proton translocation. Functionally, component of the F(0) channel, it forms part of the peripheral stalk, linking F(1) to F(0). In Aeromonas salmonicida (strain A449), this protein is ATP synthase subunit b.